A 56-amino-acid chain; its full sequence is Large ribosomal subunit protein bL32 (56 aa).

Positions 1 to 26 (MAVQQNKKSRSKRGMRRSHDALSTAQ) are disordered. Residues 7–16 (KKSRSKRGMR) are compositionally biased toward basic residues.

Belongs to the bacterial ribosomal protein bL32 family.

In Shewanella denitrificans (strain OS217 / ATCC BAA-1090 / DSM 15013), this protein is Large ribosomal subunit protein bL32.